Here is a 188-residue protein sequence, read N- to C-terminus: Phosphoribosylglycinamide formyltransferase (188 aa).

12 to 14 (GSN) contacts N(1)-(5-phospho-beta-D-ribosyl)glycinamide. (6R)-10-formyltetrahydrofolate contacts are provided by residues Lys66, 91 to 94 (MRLI), and Asn108. His110 acts as the Proton donor in catalysis.

Belongs to the GART family.

It catalyses the reaction N(1)-(5-phospho-beta-D-ribosyl)glycinamide + (6R)-10-formyltetrahydrofolate = N(2)-formyl-N(1)-(5-phospho-beta-D-ribosyl)glycinamide + (6S)-5,6,7,8-tetrahydrofolate + H(+). It functions in the pathway purine metabolism; IMP biosynthesis via de novo pathway; N(2)-formyl-N(1)-(5-phospho-D-ribosyl)glycinamide from N(1)-(5-phospho-D-ribosyl)glycinamide (10-formyl THF route): step 1/1. Functionally, catalyzes the transfer of a formyl group from 10-formyltetrahydrofolate to 5-phospho-ribosyl-glycinamide (GAR), producing 5-phospho-ribosyl-N-formylglycinamide (FGAR) and tetrahydrofolate. The sequence is that of Phosphoribosylglycinamide formyltransferase from Staphylococcus aureus (strain MRSA252).